A 452-amino-acid polypeptide reads, in one-letter code: Adenylosuccinate synthetase isozyme 1 (452 aa).

The segment at 1-22 (MSGTRASNDRSSHPGGHKRPRY) is disordered. GTP-binding positions include 37 to 43 (GDEGKGK) and 65 to 67 (GHT). Catalysis depends on Asp-38, which acts as the Proton acceptor. Mg(2+) contacts are provided by Asp-38 and Gly-65. Asp-38 contacts substrate. IMP-binding positions include 38 to 41 (DEGK), 63 to 66 (NAGH), Thr-158, Arg-172, Asn-251, Thr-266, and Arg-330. The active-site Proton donor is the His-66. 326-332 (VTTGRKR) is a binding site for substrate. GTP-binding positions include Arg-332, 358–360 (KLD), and 440–443 (GVGK).

Belongs to the adenylosuccinate synthetase family. In terms of assembly, homodimer. Mg(2+) serves as cofactor.

It is found in the cytoplasm. It catalyses the reaction IMP + L-aspartate + GTP = N(6)-(1,2-dicarboxyethyl)-AMP + GDP + phosphate + 2 H(+). It participates in purine metabolism; AMP biosynthesis via de novo pathway; AMP from IMP: step 1/2. In terms of biological role, component of the purine nucleotide cycle (PNC), which interconverts IMP and AMP to regulate the nucleotide levels in various tissues, and which contributes to glycolysis and ammoniagenesis. Catalyzes the first committed step in the biosynthesis of AMP from IMP. The chain is Adenylosuccinate synthetase isozyme 1 (adss1) from Xenopus tropicalis (Western clawed frog).